The sequence spans 225 residues: Ribose-5-phosphate isomerase A (225 aa).

Substrate contacts are provided by residues 32-35, 85-88, and 98-101; these read TGST, DGAD, and KGGG. Glu-107 acts as the Proton acceptor in catalysis. Lys-125 is a binding site for substrate.

It belongs to the ribose 5-phosphate isomerase family. Homodimer.

The enzyme catalyses aldehydo-D-ribose 5-phosphate = D-ribulose 5-phosphate. Its pathway is carbohydrate degradation; pentose phosphate pathway; D-ribose 5-phosphate from D-ribulose 5-phosphate (non-oxidative stage): step 1/1. Catalyzes the reversible conversion of ribose-5-phosphate to ribulose 5-phosphate. The protein is Ribose-5-phosphate isomerase A of Hahella chejuensis (strain KCTC 2396).